Reading from the N-terminus, the 406-residue chain is Succinylornithine transaminase (406 aa).

Lys-252 is modified (N6-(pyridoxal phosphate)lysine).

It belongs to the class-III pyridoxal-phosphate-dependent aminotransferase family. AstC subfamily. Pyridoxal 5'-phosphate is required as a cofactor.

It carries out the reaction N(2)-succinyl-L-ornithine + 2-oxoglutarate = N-succinyl-L-glutamate 5-semialdehyde + L-glutamate. Its pathway is amino-acid degradation; L-arginine degradation via AST pathway; L-glutamate and succinate from L-arginine: step 3/5. In terms of biological role, catalyzes the transamination of N(2)-succinylornithine and alpha-ketoglutarate into N(2)-succinylglutamate semialdehyde and glutamate. Can also act as an acetylornithine aminotransferase. This is Succinylornithine transaminase from Shigella sonnei (strain Ss046).